We begin with the raw amino-acid sequence, 795 residues long: Phenylalanine--tRNA ligase beta subunit (795 aa).

The tRNA-binding domain maps to 39 to 148; sequence KSEFHGVVVG…KETLVGINVY (110 aa). A B5 domain is found at 400-475; that stretch reads HKNNTIRLHH…RIYEYNNVHL (76 aa). 3 residues coordinate Mg(2+): Asp453, Asp459, and Asp463. The FDX-ACB domain maps to 701-794; it reads SKFPTVRRDI…LQKKFQAVLR (94 aa).

Belongs to the phenylalanyl-tRNA synthetase beta subunit family. Type 1 subfamily. In terms of assembly, tetramer of two alpha and two beta subunits. The cofactor is Mg(2+).

It is found in the cytoplasm. The enzyme catalyses tRNA(Phe) + L-phenylalanine + ATP = L-phenylalanyl-tRNA(Phe) + AMP + diphosphate + H(+). The polypeptide is Phenylalanine--tRNA ligase beta subunit (pheT) (Buchnera aphidicola subsp. Acyrthosiphon pisum (strain APS) (Acyrthosiphon pisum symbiotic bacterium)).